The following is a 106-amino-acid chain: A-type ATP synthase subunit F (106 aa).

The protein belongs to the V-ATPase F subunit family. Has multiple subunits with at least A(3), B(3), C, D, E, F, H, I and proteolipid K(x).

The protein resides in the cell membrane. Functionally, component of the A-type ATP synthase that produces ATP from ADP in the presence of a proton gradient across the membrane. The chain is A-type ATP synthase subunit F from Methanothermobacter thermautotrophicus (strain ATCC 29096 / DSM 1053 / JCM 10044 / NBRC 100330 / Delta H) (Methanobacterium thermoautotrophicum).